A 547-amino-acid chain; its full sequence is Putative nitric oxide synthase (547 aa).

Positions 24 to 40 are enriched in low complexity; sequence QLAPNPSSFSPTRAAST. Disordered regions lie at residues 24 to 57 and 72 to 91; these read QLAP…SRGD and VLAP…RKAL. A compositionally biased stretch (basic residues) spans 81 to 91; it reads RRRRREKRKAL. One can recognise a CP-type G domain in the interval 167 to 343; that stretch reads ADQLRDKLSY…LYDTPGVHLH (177 aa).

This sequence belongs to the TRAFAC class YlqF/YawG GTPase family. NOA1 subfamily.

The enzyme catalyses 2 L-arginine + 3 NADPH + 4 O2 + H(+) = 2 L-citrulline + 2 nitric oxide + 3 NADP(+) + 4 H2O. In terms of biological role, produces nitric oxide (NO) which is a messenger molecule involved in hormonal signaling and defense responses in plant. In Oryza sativa subsp. japonica (Rice), this protein is Putative nitric oxide synthase.